A 342-amino-acid chain; its full sequence is Aspartate carbamoyltransferase catalytic subunit (342 aa).

Carbamoyl phosphate is bound by residues R59 and T60. Residue K87 participates in L-aspartate binding. Carbamoyl phosphate is bound by residues R109, H142, and Q145. Residues R182 and R253 each coordinate L-aspartate. Residues G294 and P295 each contribute to the carbamoyl phosphate site.

The protein belongs to the aspartate/ornithine carbamoyltransferase superfamily. ATCase family. As to quaternary structure, heterododecamer (2C3:3R2) of six catalytic PyrB chains organized as two trimers (C3), and six regulatory PyrI chains organized as three dimers (R2).

The catalysed reaction is carbamoyl phosphate + L-aspartate = N-carbamoyl-L-aspartate + phosphate + H(+). It participates in pyrimidine metabolism; UMP biosynthesis via de novo pathway; (S)-dihydroorotate from bicarbonate: step 2/3. Its function is as follows. Catalyzes the condensation of carbamoyl phosphate and aspartate to form carbamoyl aspartate and inorganic phosphate, the committed step in the de novo pyrimidine nucleotide biosynthesis pathway. This Synechococcus sp. (strain WH7803) protein is Aspartate carbamoyltransferase catalytic subunit.